The sequence spans 206 residues: Transcription elongation factor A protein-like 5 (206 aa).

Over residues methionine 1–aspartate 26 the composition is skewed to basic and acidic residues. The disordered stretch occupies residues methionine 1–valine 206. The span at glutamate 27–proline 42 shows a compositional bias: acidic residues. The segment covering aspartate 43–aspartate 56 has biased composition (basic and acidic residues). Acidic residues predominate over residues glutamate 57–glycine 70. Basic and acidic residues-rich tracts occupy residues asparagine 71–serine 86, alanine 102–proline 113, aspartate 121–arginine 160, and glycine 196–valine 206.

The protein belongs to the TFS-II family. TFA subfamily.

The protein resides in the nucleus. Functionally, may be involved in transcriptional regulation. In Homo sapiens (Human), this protein is Transcription elongation factor A protein-like 5 (TCEAL5).